We begin with the raw amino-acid sequence, 220 residues long: Thiamine-phosphate synthase (220 aa).

Residues 39-43 (QLRDK) and N80 each bind 4-amino-2-methyl-5-(diphosphooxymethyl)pyrimidine. D81 and D100 together coordinate Mg(2+). S119 is a binding site for 4-amino-2-methyl-5-(diphosphooxymethyl)pyrimidine. Residue 145 to 147 (TPT) participates in 2-[(2R,5Z)-2-carboxy-4-methylthiazol-5(2H)-ylidene]ethyl phosphate binding. K148 is a binding site for 4-amino-2-methyl-5-(diphosphooxymethyl)pyrimidine. 2-[(2R,5Z)-2-carboxy-4-methylthiazol-5(2H)-ylidene]ethyl phosphate is bound at residue G176.

It belongs to the thiamine-phosphate synthase family. The cofactor is Mg(2+).

It catalyses the reaction 2-[(2R,5Z)-2-carboxy-4-methylthiazol-5(2H)-ylidene]ethyl phosphate + 4-amino-2-methyl-5-(diphosphooxymethyl)pyrimidine + 2 H(+) = thiamine phosphate + CO2 + diphosphate. The catalysed reaction is 2-(2-carboxy-4-methylthiazol-5-yl)ethyl phosphate + 4-amino-2-methyl-5-(diphosphooxymethyl)pyrimidine + 2 H(+) = thiamine phosphate + CO2 + diphosphate. The enzyme catalyses 4-methyl-5-(2-phosphooxyethyl)-thiazole + 4-amino-2-methyl-5-(diphosphooxymethyl)pyrimidine + H(+) = thiamine phosphate + diphosphate. The protein operates within cofactor biosynthesis; thiamine diphosphate biosynthesis; thiamine phosphate from 4-amino-2-methyl-5-diphosphomethylpyrimidine and 4-methyl-5-(2-phosphoethyl)-thiazole: step 1/1. Functionally, condenses 4-methyl-5-(beta-hydroxyethyl)thiazole monophosphate (THZ-P) and 2-methyl-4-amino-5-hydroxymethyl pyrimidine pyrophosphate (HMP-PP) to form thiamine monophosphate (TMP). The chain is Thiamine-phosphate synthase from Mycobacterium marinum (strain ATCC BAA-535 / M).